Consider the following 207-residue polypeptide: Claudin-11 (207 aa).

M1 is a topological domain (cytoplasmic). The helical transmembrane segment at 2 to 22 threads the bilayer; the sequence is VATCLQVVGFVTSFVGWIGVI. Over 23 to 82 the chain is Extracellular; it reads VTTSTNDWVVTCGYTIPTCRKLDELGSKGLWADCVMATGLYHCKPLVDILILPGYVQACR. A helical membrane pass occupies residues 83–103; sequence ALMIAASVLGLPAILLLLTVL. Residues 104 to 122 lie on the Cytoplasmic side of the membrane; it reads PCIRMGQEPGVAKYRRAQL. Residues 123–143 form a helical membrane-spanning segment; that stretch reads AGVLLILLALCALVATIWFPV. Residues 144-157 lie on the Extracellular side of the membrane; the sequence is CAHRETTIVSFGYS. Residues 158–178 traverse the membrane as a helical segment; sequence LYAGWIGAVLCLVGGCVILCC. At 179–207 the chain is on the cytoplasmic side; the sequence is AGDAQAFGENRFYYTAGSSSPTHAKSAHV. S197 and S198 each carry phosphoserine.

The protein belongs to the claudin family. Interacts with tetraspanin-3/TSPAN3. Interacts with OCLN.

It localises to the cell junction. Its subcellular location is the tight junction. It is found in the cell membrane. Plays a major role in tight junction-specific obliteration of the intercellular space, through calcium-independent cell-adhesion activity. The polypeptide is Claudin-11 (CLDN11) (Homo sapiens (Human)).